We begin with the raw amino-acid sequence, 198 residues long: uncharacterized protein (198 aa).

Residues 72-95 (ESEEQYDSDDDNDKLVLNDDEDDE) are disordered. Acidic residues predominate over residues 75-94 (EQYDSDDDNDKLVLNDDEDD). Residues 106–136 (EATNITNINKNIENIKNDMSNLNNMNDSNQK) adopt a coiled-coil conformation.

This is an uncharacterized protein from Plasmodium falciparum (isolate 3D7).